We begin with the raw amino-acid sequence, 212 residues long: Thiamine-phosphate synthase (212 aa).

4-amino-2-methyl-5-(diphosphooxymethyl)pyrimidine contacts are provided by residues 33 to 37 (QMRFK) and asparagine 65. Mg(2+) contacts are provided by aspartate 66 and aspartate 85. Threonine 104 lines the 4-amino-2-methyl-5-(diphosphooxymethyl)pyrimidine pocket. 130–132 (TNT) is a binding site for 2-[(2R,5Z)-2-carboxy-4-methylthiazol-5(2H)-ylidene]ethyl phosphate. Lysine 133 contacts 4-amino-2-methyl-5-(diphosphooxymethyl)pyrimidine. 2-[(2R,5Z)-2-carboxy-4-methylthiazol-5(2H)-ylidene]ethyl phosphate is bound at residue glycine 166.

This sequence belongs to the thiamine-phosphate synthase family. Mg(2+) is required as a cofactor.

It catalyses the reaction 2-[(2R,5Z)-2-carboxy-4-methylthiazol-5(2H)-ylidene]ethyl phosphate + 4-amino-2-methyl-5-(diphosphooxymethyl)pyrimidine + 2 H(+) = thiamine phosphate + CO2 + diphosphate. The catalysed reaction is 2-(2-carboxy-4-methylthiazol-5-yl)ethyl phosphate + 4-amino-2-methyl-5-(diphosphooxymethyl)pyrimidine + 2 H(+) = thiamine phosphate + CO2 + diphosphate. The enzyme catalyses 4-methyl-5-(2-phosphooxyethyl)-thiazole + 4-amino-2-methyl-5-(diphosphooxymethyl)pyrimidine + H(+) = thiamine phosphate + diphosphate. The protein operates within cofactor biosynthesis; thiamine diphosphate biosynthesis; thiamine phosphate from 4-amino-2-methyl-5-diphosphomethylpyrimidine and 4-methyl-5-(2-phosphoethyl)-thiazole: step 1/1. Functionally, condenses 4-methyl-5-(beta-hydroxyethyl)thiazole monophosphate (THZ-P) and 2-methyl-4-amino-5-hydroxymethyl pyrimidine pyrophosphate (HMP-PP) to form thiamine monophosphate (TMP). This is Thiamine-phosphate synthase from Flavobacterium johnsoniae (strain ATCC 17061 / DSM 2064 / JCM 8514 / BCRC 14874 / CCUG 350202 / NBRC 14942 / NCIMB 11054 / UW101) (Cytophaga johnsonae).